A 365-amino-acid polypeptide reads, in one-letter code: Carbamoyl phosphate synthase small chain (365 aa).

CPSase regions lie at residues 1–166 (MKRQ…PSPG) and 1–169 (MKRQ…GRGH). L-glutamine contacts are provided by S45, G218, and G220. A Glutamine amidotransferase type-1 domain is found at 170–357 (RVVLVDFGMK…LTMIENFKKE (188 aa)). The active-site Nucleophile is the C245. L246, Q249, N287, G289, and Y290 together coordinate L-glutamine. Active-site residues include H330 and E332.

It belongs to the CarA family. As to quaternary structure, composed of two chains; the small (or glutamine) chain promotes the hydrolysis of glutamine to ammonia, which is used by the large (or ammonia) chain to synthesize carbamoyl phosphate. Tetramer of heterodimers (alpha,beta)4.

It carries out the reaction hydrogencarbonate + L-glutamine + 2 ATP + H2O = carbamoyl phosphate + L-glutamate + 2 ADP + phosphate + 2 H(+). The catalysed reaction is L-glutamine + H2O = L-glutamate + NH4(+). Its pathway is amino-acid biosynthesis; L-arginine biosynthesis; carbamoyl phosphate from bicarbonate: step 1/1. It functions in the pathway pyrimidine metabolism; UMP biosynthesis via de novo pathway; (S)-dihydroorotate from bicarbonate: step 1/3. Functionally, small subunit of the glutamine-dependent carbamoyl phosphate synthetase (CPSase). CPSase catalyzes the formation of carbamoyl phosphate from the ammonia moiety of glutamine, carbonate, and phosphate donated by ATP, constituting the first step of 2 biosynthetic pathways, one leading to arginine and/or urea and the other to pyrimidine nucleotides. The small subunit (glutamine amidotransferase) binds and cleaves glutamine to supply the large subunit with the substrate ammonia. The polypeptide is Carbamoyl phosphate synthase small chain (Bacillus cereus (strain ATCC 10987 / NRS 248)).